Reading from the N-terminus, the 260-residue chain is tRNA pseudouridine synthase C (260 aa).

Aspartate 54 is a catalytic residue.

Belongs to the pseudouridine synthase RluA family.

It catalyses the reaction uridine(65) in tRNA = pseudouridine(65) in tRNA. Responsible for synthesis of pseudouridine from uracil-65 in transfer RNAs. The polypeptide is tRNA pseudouridine synthase C (truC) (Escherichia coli (strain K12)).